A 198-amino-acid chain; its full sequence is Molybdopterin synthase catalytic subunit (198 aa).

Substrate-binding positions include 107–108 (HR), Lys123, and 130–132 (KKE).

Belongs to the MoaE family. MOCS2B subfamily. In terms of assembly, heterotetramer; composed of 2 small (MOCS2A) and 2 large (MOCS2B) subunits.

The protein localises to the cytoplasm. It catalyses the reaction 2 [molybdopterin-synthase sulfur-carrier protein]-C-terminal-Gly-aminoethanethioate + cyclic pyranopterin phosphate + H2O = molybdopterin + 2 [molybdopterin-synthase sulfur-carrier protein]-C-terminal Gly-Gly + 2 H(+). It functions in the pathway cofactor biosynthesis; molybdopterin biosynthesis. Catalytic subunit of the molybdopterin synthase complex, a complex that catalyzes the conversion of precursor Z into molybdopterin. Acts by mediating the incorporation of 2 sulfur atoms from thiocarboxylated MOCS2A into precursor Z to generate a dithiolene group. This is Molybdopterin synthase catalytic subunit from Arabidopsis thaliana (Mouse-ear cress).